Here is a 193-residue protein sequence, read N- to C-terminus: Imidazoleglycerol-phosphate dehydratase (193 aa).

This sequence belongs to the imidazoleglycerol-phosphate dehydratase family.

The protein resides in the cytoplasm. It carries out the reaction D-erythro-1-(imidazol-4-yl)glycerol 3-phosphate = 3-(imidazol-4-yl)-2-oxopropyl phosphate + H2O. It participates in amino-acid biosynthesis; L-histidine biosynthesis; L-histidine from 5-phospho-alpha-D-ribose 1-diphosphate: step 6/9. The sequence is that of Imidazoleglycerol-phosphate dehydratase from Sulfolobus acidocaldarius (strain ATCC 33909 / DSM 639 / JCM 8929 / NBRC 15157 / NCIMB 11770).